Here is a 554-residue protein sequence, read N- to C-terminus: Glucose-6-phosphate isomerase (554 aa).

The Proton donor role is filled by Glu-359. Active-site residues include His-390 and Lys-518.

It belongs to the GPI family.

The protein localises to the cytoplasm. It carries out the reaction alpha-D-glucose 6-phosphate = beta-D-fructose 6-phosphate. It functions in the pathway carbohydrate biosynthesis; gluconeogenesis. It participates in carbohydrate degradation; glycolysis; D-glyceraldehyde 3-phosphate and glycerone phosphate from D-glucose: step 2/4. Functionally, catalyzes the reversible isomerization of glucose-6-phosphate to fructose-6-phosphate. This is Glucose-6-phosphate isomerase from Ectopseudomonas mendocina (strain ymp) (Pseudomonas mendocina).